We begin with the raw amino-acid sequence, 622 residues long: Chaperone protein HscA homolog (622 aa).

Belongs to the heat shock protein 70 family.

Its function is as follows. Chaperone involved in the maturation of iron-sulfur cluster-containing proteins. Has a low intrinsic ATPase activity which is markedly stimulated by HscB. The chain is Chaperone protein HscA homolog from Burkholderia ambifaria (strain MC40-6).